The sequence spans 73 residues: Antimicrobial peptide TsAP-1 (73 aa).

The first 22 residues, 1 to 22 (MQIKHLITLFFLVLIVADQCSA), serve as a signal peptide directing secretion. Lys39 carries the post-translational modification Lysine amide. A propeptide spanning residues 45 to 73 (EISAQIEQYKDLQKREAELEELLDRLPMY) is cleaved from the precursor.

In terms of tissue distribution, expressed by the venom gland.

The protein resides in the secreted. In terms of biological role, has a low antimicrobial activity against S.aureus, E.coli, and C.albicans (MICs 120-160 uM). Has a low hemolytic activity (4% at 160 uM). Also inhibits the growth of two cancer cell lines on a total of five (the squamous carcinoma cell line H157 (IC(50)=55.9 uM) and the lung adenocarcinoma cell line H838 (IC(50)=52.5 uM)). The sequence is that of Antimicrobial peptide TsAP-1 from Tityus serrulatus (Brazilian scorpion).